The chain runs to 408 residues: LL-diaminopimelate aminotransferase (408 aa).

Positions 15 and 42 each coordinate substrate. Pyridoxal 5'-phosphate contacts are provided by residues tyrosine 72, 108–109, tyrosine 132, asparagine 187, tyrosine 218, and 246–248; these read SK and SFS. Positions 109, 132, and 187 each coordinate substrate. Lysine 249 is subject to N6-(pyridoxal phosphate)lysine. The pyridoxal 5'-phosphate site is built by arginine 257 and asparagine 292. Substrate-binding residues include asparagine 292 and arginine 388.

It belongs to the class-I pyridoxal-phosphate-dependent aminotransferase family. LL-diaminopimelate aminotransferase subfamily. In terms of assembly, homodimer. Requires pyridoxal 5'-phosphate as cofactor.

It catalyses the reaction (2S,6S)-2,6-diaminopimelate + 2-oxoglutarate = (S)-2,3,4,5-tetrahydrodipicolinate + L-glutamate + H2O + H(+). It participates in amino-acid biosynthesis; L-lysine biosynthesis via DAP pathway; LL-2,6-diaminopimelate from (S)-tetrahydrodipicolinate (aminotransferase route): step 1/1. In terms of biological role, involved in the synthesis of meso-diaminopimelate (m-DAP or DL-DAP), required for both lysine and peptidoglycan biosynthesis. Catalyzes the direct conversion of tetrahydrodipicolinate to LL-diaminopimelate. This Prochlorococcus marinus (strain MIT 9301) protein is LL-diaminopimelate aminotransferase.